The sequence spans 172 residues: Disulfide bond formation protein B (172 aa).

At 1 to 11 (MNPFRWSFRAQ) the chain is on the cytoplasmic side. Residues 12-28 (FLLGFLACAGLLAYAIY) form a helical membrane-spanning segment. The Periplasmic portion of the chain corresponds to 29 to 46 (VQLHLGLEPCPLCIFQRI). The cysteines at positions 38 and 41 are disulfide-linked. The helical transmembrane segment at 47 to 63 (AFAALAVFFLLGALHGP) threads the bilayer. Topologically, residues 64-70 (RAAAGRK) are cytoplasmic. The helical transmembrane segment at 71–88 (VYGVLSFIAAGVGMGIAA) threads the bilayer. At 89 to 145 (RHVWVQIRPKDMMSSCGPPLSFLSETMGPFEVFRTVLTGTGDCGNIDWRFLGLSMPM) the chain is on the periplasmic side. A disulfide bridge links Cys104 with Cys131. Residues 146-164 (WSMVWFVGLALWALYAGFK) form a helical membrane-spanning segment. The Cytoplasmic segment spans residues 165–172 (VRRSSVHH).

Belongs to the DsbB family.

It localises to the cell inner membrane. Required for disulfide bond formation in some periplasmic proteins. Acts by oxidizing the DsbA protein. This chain is Disulfide bond formation protein B, found in Xanthomonas axonopodis pv. citri (strain 306).